The following is a 170-amino-acid chain: Adenine phosphoribosyltransferase (170 aa).

This sequence belongs to the purine/pyrimidine phosphoribosyltransferase family. Homodimer.

It localises to the cytoplasm. The catalysed reaction is AMP + diphosphate = 5-phospho-alpha-D-ribose 1-diphosphate + adenine. It participates in purine metabolism; AMP biosynthesis via salvage pathway; AMP from adenine: step 1/1. In terms of biological role, catalyzes a salvage reaction resulting in the formation of AMP, that is energically less costly than de novo synthesis. This is Adenine phosphoribosyltransferase from Bacillus mycoides (strain KBAB4) (Bacillus weihenstephanensis).